Consider the following 86-residue polypeptide: Small ribosomal subunit protein uS15 (86 aa).

A disordered region spans residues 1–22; the sequence is MSVDTQKVIEDNKRSAQDTGSP. Positions 7-16 are enriched in basic and acidic residues; that stretch reads KVIEDNKRSA.

The protein belongs to the universal ribosomal protein uS15 family. In terms of assembly, part of the 30S ribosomal subunit. Forms a bridge to the 50S subunit in the 70S ribosome, contacting the 23S rRNA.

In terms of biological role, one of the primary rRNA binding proteins, it binds directly to 16S rRNA where it helps nucleate assembly of the platform of the 30S subunit by binding and bridging several RNA helices of the 16S rRNA. Forms an intersubunit bridge (bridge B4) with the 23S rRNA of the 50S subunit in the ribosome. The polypeptide is Small ribosomal subunit protein uS15 (Xanthomonas axonopodis pv. citri (strain 306)).